The following is a 429-amino-acid chain: BURP domain-containing protein 3 (429 aa).

A signal peptide spans 1–21; that stretch reads MDRLLACLLGFLLIASVGSHA. Positions 59-81 are disordered; it reads GGGVHVDAGHGKPGGTTVDVGKG. The BURP domain maps to 213-428; it reads FFLEKDLHPG…PQDHVVWTRS (216 aa).

In terms of tissue distribution, expressed in stems, leaves, shoot, panicles and stamen.

In Oryza sativa subsp. japonica (Rice), this protein is BURP domain-containing protein 3 (BURP3).